Reading from the N-terminus, the 146-residue chain is Probable calcium-binding protein CML40 (146 aa).

An EF-hand 1 domain is found at 7 to 42 (NKRDEYQRVFSCFDKSHQGKVSVSTIERCVDAIKSG). The tract at residues 44-65 (RAVVDQEDTTNPNPEESTDDKS) is disordered. Residues 116–146 (KSLKDCEVMISQFDINRDGIINFDEFRAMMQ) enclose the EF-hand 2 domain. Ca(2+) is bound by residues aspartate 129, asparagine 131, aspartate 133, and glutamate 140.

In terms of biological role, potential calcium sensor. This chain is Probable calcium-binding protein CML40 (CML40), found in Arabidopsis thaliana (Mouse-ear cress).